An 88-amino-acid chain; its full sequence is Arminin 7965 (88 aa).

A signal peptide spans 1-18 (MKTVFAILFLTFIAFTYA). The propeptide occupies 19 to 57 (KSYEDVKEEIKNEVEREIFEDLEEESDVLDSNVRELNDA). Ala85 carries the post-translational modification Alanine amide.

The protein belongs to the arminin family. As to expression, expressed in entodermal epithelium along the body column.

The protein resides in the secreted. Its subcellular location is the target cell membrane. Functionally, antimicrobial peptide with a broad-spectrum antimicrobial activity. Keeps its antibacterial activity under a wide range of salt concentrations that mimic physiological conditions of human blood, which is surprising, since Hydra is an obligate freshwater animal with nearly no salt tolerance. Does not affect red blood cells. The sequence is that of Arminin 7965 from Hydra vulgaris (Hydra).